Reading from the N-terminus, the 304-residue chain is MIVGPVISLLLSYFVLVSGASIEPRAAKSTDQPVDVPYDIDEFTQAASLAQQAYCTKGAHDYGLKIGDSTLLWTTGDGSLKQRVNVHHSESLGIVVAFQGTNSISPFSDFHDIQFRPVDPDARYKQYYPKGTKVMNGFQNAYTDDVDTVFKHVEKFKQEKNETRVTVTGHSLGAAMGLLGSMDIALRMNGGLHKAYLFGLPRVGNPTFANFVDKTIGDKLHWVVNGGDWVPLVPPRPFGYQHPSNYIWIYPSNSDNWRLYPGQENVHGMLTVPQDVGTSDHLGVYFHSKIGGRSGPCPSQLGGF.

The signal sequence occupies residues Met1 to Gly19. A disulfide bridge connects residues Cys55 and Cys297. Asn161 is a glycosylation site (N-linked (GlcNAc...) asparagine). Ser171 functions as the Nucleophile in the catalytic mechanism. Active-site residues include Asp228 and His281.

The protein belongs to the AB hydrolase superfamily. Lipase family. Class 3 subfamily.

The protein localises to the secreted. Its subcellular location is the cell wall. It catalyses the reaction a monoacylglycerol + H2O = glycerol + a fatty acid + H(+). It carries out the reaction a diacylglycerol + H2O = a monoacylglycerol + a fatty acid + H(+). In terms of biological role, secreted lipase involved in Dandruff and seborrheic dermatitis (D/SD) probably via lipase-mediated breakdown of sebaceous lipids and release of irritating free fatty acids. Shows activity against monoglyceride and diglyceride substrates, but not triglyceride substrates and does not exhibit regio-selective production of diacylglycerols. Hydrolyzes distearin, dilinolein, dipalmitoylglycerol and dipalmitolein. Cleaves oleic acid from 1,2 isomers of diolein on both the 1 and the 2 position of the glycerol backbone, resulting mainly in free fatty acids but no monoolein is detected. Shows activity on monoolein and liberates mostly free fatty acids, but can also perform the reverse reaction and produce diolein. This is Secreted mono- and diacylglycerol lipase MDL3 from Malassezia globosa (strain ATCC MYA-4612 / CBS 7966) (Dandruff-associated fungus).